Here is a 725-residue protein sequence, read N- to C-terminus: Non-structural protein 4 (725 aa).

Disordered stretches follow at residues methionine 1–asparagine 26 and aspartate 666–glutamate 725. Residues threonine 7–proline 16 show a composition bias toward polar residues. The span at glutamate 675–aspartate 686 shows a compositional bias: basic and acidic residues. Residues aspartate 687 to aspartate 709 show a composition bias toward acidic residues.

The chain is Non-structural protein 4 from Rice gall dwarf virus (RGDV).